We begin with the raw amino-acid sequence, 549 residues long: Glucose-6-phosphate isomerase (549 aa).

Glu353 functions as the Proton donor in the catalytic mechanism. Residues His384 and Lys513 contribute to the active site.

This sequence belongs to the GPI family.

It is found in the cytoplasm. It catalyses the reaction alpha-D-glucose 6-phosphate = beta-D-fructose 6-phosphate. It functions in the pathway carbohydrate biosynthesis; gluconeogenesis. The protein operates within carbohydrate degradation; glycolysis; D-glyceraldehyde 3-phosphate and glycerone phosphate from D-glucose: step 2/4. Its function is as follows. Catalyzes the reversible isomerization of glucose-6-phosphate to fructose-6-phosphate. The polypeptide is Glucose-6-phosphate isomerase (Brucella ovis (strain ATCC 25840 / 63/290 / NCTC 10512)).